Reading from the N-terminus, the 333-residue chain is Small GTPase-like protein LIP2 (333 aa).

The interval 11–288 (NKEHMVAPLC…YKYNTLPQHN (278 aa)) is small GTPase-like. Residues 29-36 (GDSGVGKS), 90-94 (DVSGH), and 160-163 (NKAD) contribute to the GTP site. Residues 242-253 (SPSSAWSLSHAP) show a composition bias toward polar residues. The segment at 242–265 (SPSSAWSLSHAPSQRLDEGTSDED) is disordered.

It belongs to the small GTPase superfamily.

In Arabidopsis thaliana (Mouse-ear cress), this protein is Small GTPase-like protein LIP2.